The sequence spans 241 residues: Chaperone protein HifB (241 aa).

Residues 1-27 (MGKTMFKKTLLFFTALFFAALCAFSAN) form the signal peptide.

Belongs to the periplasmic pilus chaperone family.

It is found in the periplasm. Its function is as follows. Mediates assembly of pili by forming soluble multimeric complexes with pili subunits as an intermediate step in the assembly process. This protein is involved in type B pili (HifA) assembly. This Haemophilus influenzae protein is Chaperone protein HifB (hifB).